Here is a 97-residue protein sequence, read N- to C-terminus: Cobalt transport protein CbiN (97 aa).

The next 2 membrane-spanning stretches (helical) occupy residues 6-26 (VLMI…YSGL) and 68-88 (SLLF…FFGY).

Belongs to the CbiN family. In terms of assembly, forms an energy-coupling factor (ECF) transporter complex composed of an ATP-binding protein (A component, CbiO), a transmembrane protein (T component, CbiQ) and 2 possible substrate-capture proteins (S components, CbiM and CbiN) of unknown stoichimetry.

The protein resides in the cell membrane. The protein operates within cofactor biosynthesis; adenosylcobalamin biosynthesis. Functionally, part of the energy-coupling factor (ECF) transporter complex CbiMNOQ involved in cobalt import. The polypeptide is Cobalt transport protein CbiN (Methanococcus maripaludis (strain C5 / ATCC BAA-1333)).